The primary structure comprises 291 residues: 33 kDa chaperonin (291 aa).

Intrachain disulfides connect Cys-229–Cys-231 and Cys-262–Cys-265.

It belongs to the HSP33 family. Under oxidizing conditions two disulfide bonds are formed involving the reactive cysteines. Under reducing conditions zinc is bound to the reactive cysteines and the protein is inactive.

Its subcellular location is the cytoplasm. Redox regulated molecular chaperone. Protects both thermally unfolding and oxidatively damaged proteins from irreversible aggregation. Plays an important role in the bacterial defense system toward oxidative stress. This chain is 33 kDa chaperonin, found in Vibrio vulnificus (strain YJ016).